Here is a 509-residue protein sequence, read N- to C-terminus: MKRALISVSDKNGIVPFAEKLVELGVEIISTGGTKATFEQAGIPVTGIEDVTKFPEMLDGRVKTLHPAIHGGLLARRDTAEHMEAIAAHDIEPIDLVVVNLYPFQETIQKPGVTLEEAIENIDIGGPSMLRSAAKNYAAVTVVVDAADYDTVLTELKEHGATTFETRQRLAAKVFRHTAAYDAVIAEYLTKITGETFPEKVTFTYNRKQALRYGENPHQDAAFYTEPVALLNSISAAKQLHGKELSYNNIRDADAALKIANEFTEPVAVAVKHMNPCGVGVGENIEEAYLKAYEADETSIFGGIVALNKEVDAKTAEHMSKIFLEIIIAPSFSEEAFTILAKKKNIRLLTVPFAGSVESLEKTSVNGGLLIQASDSFVEDSAGYEVVTEKQPTEAEMKALLAQWKIVKHVKSNAIVVGSDKQTLGIGAGQMNRIGSALIALEQAGEKAKGAVLASDAFFPMDDTVEAAAKAGITAIIQPGGSIKDKESIAMADKYGISMVLTHVRHFKH.

The MGS-like domain maps to 1–144 (MKRALISVSD…KNYAAVTVVV (144 aa)).

The protein belongs to the PurH family.

The enzyme catalyses (6R)-10-formyltetrahydrofolate + 5-amino-1-(5-phospho-beta-D-ribosyl)imidazole-4-carboxamide = 5-formamido-1-(5-phospho-D-ribosyl)imidazole-4-carboxamide + (6S)-5,6,7,8-tetrahydrofolate. It carries out the reaction IMP + H2O = 5-formamido-1-(5-phospho-D-ribosyl)imidazole-4-carboxamide. It participates in purine metabolism; IMP biosynthesis via de novo pathway; 5-formamido-1-(5-phospho-D-ribosyl)imidazole-4-carboxamide from 5-amino-1-(5-phospho-D-ribosyl)imidazole-4-carboxamide (10-formyl THF route): step 1/1. It functions in the pathway purine metabolism; IMP biosynthesis via de novo pathway; IMP from 5-formamido-1-(5-phospho-D-ribosyl)imidazole-4-carboxamide: step 1/1. This Listeria welshimeri serovar 6b (strain ATCC 35897 / DSM 20650 / CCUG 15529 / CIP 8149 / NCTC 11857 / SLCC 5334 / V8) protein is Bifunctional purine biosynthesis protein PurH.